We begin with the raw amino-acid sequence, 799 residues long: Oxygen sensor protein DosP (799 aa).

The region spanning 10 to 81 (ADGIFFPALE…YIRHNREGGK (72 aa)) is the PAS 1 domain. Heme is bound by residues H69 and M87. The PAS 2 domain maps to 134 to 207 (QTRQLIIAVD…LQQLLWKTAR (74 aa)). The 53-residue stretch at 208 to 260 (DQDEFLLLTRTGEKIWIKASISPVYDVLAHLQNLVMTFSDITEERQIRQLEGN) folds into the PAC domain. In terms of domain architecture, GGDEF spans 402–532 (VSPVVYLIGV…GGNGWQFFSP (131 aa)). One can recognise an EAL domain in the interval 541–795 (RLVLGAALKE…EIPGWMSSVL (255 aa)).

In terms of assembly, homodimer; has been previously suggested to be a homotetramer based on size exclusion chromatography. Forms a complex with DosC. The cofactor is heme. Mg(2+) serves as cofactor. In terms of processing, the heme distal ligand is coordinated by Met-87 in the active Fe(2+) (ferrous) form, by O(2) in the O(2)-bound form and by H(2)O in the inactive Fe(3+) (ferric) form.

It carries out the reaction 3',3'-c-di-GMP + H2O = 5'-phosphoguanylyl(3'-&gt;5')guanosine + H(+). Its activity is regulated as follows. Has c-di-GMP PDE activity in both Fe(2+) and Fe(3+)-bound forms; this activity is increased 6-7 fold by binding of O(2) and CO and NO. Has cAMP PDE activity only when the heme is in the Fe(2+) form. cAMP PDE activity is inhibited by oxidation of the heme iron and by binding of external ligands such as CO and NO. Also strongly inhibited by etazolate hydrochloride, a selective cAMP PDE inhibitor. PDE activity is inhibited in the absence of oxygen. In terms of biological role, heme-based oxygen sensor protein displaying phosphodiesterase (PDE) activity toward c-di-GMP in response to oxygen availability. Involved in the modulation of intracellular c-di-GMP levels, in association with DosC which catalyzes the biosynthesis of c-di-GMP (diguanylate cyclase activity). Cyclic-di-GMP is a second messenger which controls cell surface-associated traits in bacteria. Has very poor PDE activity on cAMP but is not active with cGMP, bis(p-nitrophenyl) phosphate or p-nitrophenyl phosphate. Via its PDE activity on c-di-GMP, DosP regulates biofilm formation through the repression of transcription of the csgBAC operon, which encodes curli structural subunits. The sequence is that of Oxygen sensor protein DosP (dosP) from Escherichia coli (strain K12).